The following is a 419-amino-acid chain: Putative nucleobase-ascorbate transporter 9 (419 aa).

Residues 1 to 22 show a composition bias toward gly residues; the sequence is MANGAGNGGGGAGGNGGGGNNG. A disordered region spans residues 1–28; sequence MANGAGNGGGGAGGNGGGGNNGAGNRAE. 10 helical membrane passes run 64-84, 91-111, 113-133, 153-173, 184-204, 220-240, 273-293, 313-333, 334-354, and 370-390; these read LLSLGITVLIPSLLVPLMGGG, VIQTLLFVSGLTTLFQSFFGT, LPVIASASYAYIIPITSIIYS, IQGALIITGCFQVLVCFLGVW, SIAPLVTFTGLGLYHIGFPLV, GMMLCIPVVWLFAQLLTSSGV, SFAMMAASFVTLFESTGLFYA, RVIQISAAFMLFFSIFGKFGA, FFASIPLPIMASLYCIVLCFV, and FNTKFILGFSFFMAISIPQYF.

The protein belongs to the nucleobase:cation symporter-2 (NCS2) (TC 2.A.40) family.

It localises to the membrane. This is Putative nucleobase-ascorbate transporter 9 (NAT9) from Arabidopsis thaliana (Mouse-ear cress).